Reading from the N-terminus, the 248-residue chain is 1-(5-phosphoribosyl)-5-[(5-phosphoribosylamino)methylideneamino] imidazole-4-carboxamide isomerase (248 aa).

Asp-11 functions as the Proton acceptor in the catalytic mechanism. Catalysis depends on Asp-132, which acts as the Proton donor.

Belongs to the HisA/HisF family.

The protein localises to the cytoplasm. It carries out the reaction 1-(5-phospho-beta-D-ribosyl)-5-[(5-phospho-beta-D-ribosylamino)methylideneamino]imidazole-4-carboxamide = 5-[(5-phospho-1-deoxy-D-ribulos-1-ylimino)methylamino]-1-(5-phospho-beta-D-ribosyl)imidazole-4-carboxamide. Its pathway is amino-acid biosynthesis; L-histidine biosynthesis; L-histidine from 5-phospho-alpha-D-ribose 1-diphosphate: step 4/9. This Afipia carboxidovorans (strain ATCC 49405 / DSM 1227 / KCTC 32145 / OM5) (Oligotropha carboxidovorans) protein is 1-(5-phosphoribosyl)-5-[(5-phosphoribosylamino)methylideneamino] imidazole-4-carboxamide isomerase.